The chain runs to 154 residues: Endoribonuclease YbeY (154 aa).

The Zn(2+) site is built by His-115, His-119, and His-125.

This sequence belongs to the endoribonuclease YbeY family. It depends on Zn(2+) as a cofactor.

It is found in the cytoplasm. Functionally, single strand-specific metallo-endoribonuclease involved in late-stage 70S ribosome quality control and in maturation of the 3' terminus of the 16S rRNA. The polypeptide is Endoribonuclease YbeY (Halorhodospira halophila (strain DSM 244 / SL1) (Ectothiorhodospira halophila (strain DSM 244 / SL1))).